Here is a 263-residue protein sequence, read N- to C-terminus: Probable 6-oxopurine nucleoside phosphorylase (263 aa).

Phosphate-binding positions include threonine 9, 49–50 (RH), and 82–83 (TA). Residue methionine 181 coordinates substrate. Threonine 182 contacts phosphate. 205 to 207 (NYA) contributes to the substrate binding site.

It belongs to the PNP/MTAP phosphorylase family. MTAP subfamily. Homohexamer. Dimer of a homotrimer.

It catalyses the reaction a purine D-ribonucleoside + phosphate = a purine nucleobase + alpha-D-ribose 1-phosphate. Its pathway is purine metabolism; purine nucleoside salvage. Purine nucleoside phosphorylase which is highly specific for 6-oxopurine nucleosides. Cleaves guanosine or inosine to respective bases and sugar-1-phosphate molecules. Involved in purine salvage. The chain is Probable 6-oxopurine nucleoside phosphorylase from Dictyoglomus turgidum (strain DSM 6724 / Z-1310).